Reading from the N-terminus, the 280-residue chain is Dermonecrotic toxin LsSicTox-alphaIA1 (280 aa).

H12 is a catalytic residue. The Mg(2+) site is built by E32 and D34. The Nucleophile role is filled by H48. 2 disulfide bridges follow: C52-C58 and C54-C197. D92 contacts Mg(2+).

The protein belongs to the arthropod phospholipase D family. Class II subfamily. Mg(2+) is required as a cofactor. Expressed by the venom gland.

Its subcellular location is the secreted. It carries out the reaction an N-(acyl)-sphingosylphosphocholine = an N-(acyl)-sphingosyl-1,3-cyclic phosphate + choline. The enzyme catalyses an N-(acyl)-sphingosylphosphoethanolamine = an N-(acyl)-sphingosyl-1,3-cyclic phosphate + ethanolamine. It catalyses the reaction a 1-acyl-sn-glycero-3-phosphocholine = a 1-acyl-sn-glycero-2,3-cyclic phosphate + choline. The catalysed reaction is a 1-acyl-sn-glycero-3-phosphoethanolamine = a 1-acyl-sn-glycero-2,3-cyclic phosphate + ethanolamine. Dermonecrotic toxins cleave the phosphodiester linkage between the phosphate and headgroup of certain phospholipids (sphingolipid and lysolipid substrates), forming an alcohol (often choline) and a cyclic phosphate. This toxin acts on sphingomyelin (SM). It may also act on ceramide phosphoethanolamine (CPE), lysophosphatidylcholine (LPC) and lysophosphatidylethanolamine (LPE), but not on lysophosphatidylserine (LPS), and lysophosphatidylglycerol (LPG). It acts by transphosphatidylation, releasing exclusively cyclic phosphate products as second products. Induces dermonecrosis, hemolysis, increased vascular permeability, edema, inflammatory response, and platelet aggregation. The protein is Dermonecrotic toxin LsSicTox-alphaIA1 of Loxosceles similis (Brazilian brown spider).